Here is a 1017-residue protein sequence, read N- to C-terminus: Semaphorin-6D (1017 aa).

An N-terminal signal peptide occupies residues 1–20; the sequence is MRVFLLCAYILLLMISQLRA. Over 21-606 the chain is Extracellular; it reads VSFPEDDEPL…GESNQMVHMN (586 aa). Residues 27–512 enclose the Sema domain; it reads DEPLNTVDYH…FSSCVIRIPL (486 aa). Asn-51 carries N-linked (GlcNAc...) asparagine glycosylation. 4 disulfides stabilise this stretch: Cys-108/Cys-118, Cys-136/Cys-145, Cys-259/Cys-370, and Cys-284/Cys-329. Residue Asn-283 is glycosylated (N-linked (GlcNAc...) asparagine). N-linked (GlcNAc...) asparagine glycosylation is found at Asn-435 and Asn-461. Intrachain disulfides connect Cys-477–Cys-506, Cys-515–Cys-533, Cys-521–Cys-568, and Cys-525–Cys-541. The PSI domain occupies 514–569; that stretch reads RCERYGSCKKSCIASRDPYCGWLSQGSCGRVTPGMLAEGYEQDAEFGNTAHLGDCH. Residues 607-627 form a helical membrane-spanning segment; sequence VLITCVFAAFVLGAFIAGVAV. Over 628–1017 the chain is Cytoplasmic; that stretch reads YCYRDMFVRK…SVRPLNKYTY (390 aa). Phosphoserine is present on residues Ser-667, Ser-678, and Ser-688. Disordered regions lie at residues 688–719, 731–769, 783–818, and 873–912; these read SRKE…PTPE, AMKS…GHIP, TSFS…RSVD, and LYSP…HKNS. Position 717 is a phosphothreonine (Thr-717). The segment covering 734–749 has biased composition (basic and acidic residues); sequence SHSEKAHGHGASRKET. Ser-875, Ser-901, and Ser-927 each carry phosphoserine. The span at 875 to 886 shows a compositional bias: polar residues; that stretch reads SPPSTLPRNSPT. Residues 965-981 show a composition bias toward polar residues; that stretch reads LQPSLSRQSSYTSNGTL. The tract at residues 965–1017 is disordered; it reads LQPSLSRQSSYTSNGTLPRTGLKRTPSLKPDVPPKPSFVPQTPSVRPLNKYTY.

The protein belongs to the semaphorin family.

The protein resides in the cell membrane. In terms of biological role, shows growth cone collapsing activity on dorsal root ganglion (DRG) neurons in vitro. May be a stop signal for the DRG neurons in their target areas, and possibly also for other neurons. May also be involved in the maintenance and remodeling of neuronal connections. Ligand of TREM2 with PLXNA1 as coreceptor in dendritic cells, plays a role in the generation of immune responses and skeletal homeostasis. The chain is Semaphorin-6D (SEMA6D) from Pongo abelii (Sumatran orangutan).